A 137-amino-acid polypeptide reads, in one-letter code: Protein CTLA-2-alpha (137 aa).

Positions M1–S27 are cleaved as a signal peptide. 2 consecutive repeat copies span residues E39–K41 and E42–K44. The tract at residues E39 to K44 is 2 X 3 AA tandem repeats of E-W-K. The interval A114–E137 is disordered.

It to the propeptide regions of cysteine proteases.

It is found in the secreted. Its function is as follows. Not known, expressed in activated T-cell. The chain is Protein CTLA-2-alpha (Ctla2a) from Mus musculus (Mouse).